The chain runs to 1730 residues: Meiosis regulator and mRNA stability factor 1 (1730 aa).

Ser-65 is subject to Phosphoserine. The region spanning 352-489 (IGVFWDIENC…ALLHHANQLI (138 aa)) is the NYN domain. The segment covering 655 to 668 (MESKSGNRNSDHQQ) has biased composition (basic and acidic residues). A disordered region spans residues 655-722 (MESKSGNRNS…VNSPVEKKKR (68 aa)). Phosphotyrosine is present on Tyr-698. Residues 781–860 (VDIQVSNVDY…KKILVSLSTG (80 aa)) enclose the RRM domain. 2 HTH OST-type domains span residues 865-939 (SLSL…SPLG) and 993-1069 (SLKV…HNKP). Phosphoserine occurs at positions 1081 and 1083. HTH OST-type domains are found at residues 1089-1163 (QLIQ…LTHR), 1165-1241 (QVKR…RKRE), 1249-1324 (RTKQ…TEVE), 1325-1400 (RFKA…INRK), 1401-1475 (SLRS…VKLT), and 1476-1550 (SLYL…LKND). The segment at 1667–1714 (VQKGNLSCDSSPSSPAASPAPPGPSSEAPRPLFSKDAVESPAKKQPKN) is disordered. Ser-1684 bears the Phosphoserine mark.

In terms of assembly, interacts with LIMK2. In terms of tissue distribution, predominantly present in oocytes and barely detectable in granulosa cells (at protein level).

It localises to the peroxisome. Functionally, essential regulator of oogenesis required for female meiotic progression to repress transposable elements and preventing their mobilization, which is essential for the germline integrity. Probably acts via some RNA metabolic process, equivalent to the piRNA system in males, which mediates the repression of transposable elements during meiosis by forming complexes composed of RNAs and governs the methylation and subsequent repression of transposons. Also required to protect from DNA double-strand breaks. The sequence is that of Meiosis regulator and mRNA stability factor 1 (Marf1) from Mus musculus (Mouse).